The chain runs to 792 residues: 5-methyltetrahydropteroyltriglutamate--homocysteine methyltransferase (792 aa).

5-methyltetrahydropteroyltri-L-glutamate contacts are provided by residues 16–19 (RELK) and K112. L-homocysteine contacts are provided by residues 432-434 (IGS) and E485. L-methionine-binding positions include 432–434 (IGS) and E485. Residues 516–517 (RC) and W562 each bind 5-methyltetrahydropteroyltri-L-glutamate. D600 contacts L-homocysteine. D600 is a binding site for L-methionine. Position 606 (E606) interacts with 5-methyltetrahydropteroyltri-L-glutamate. The Zn(2+) site is built by H642, C644, and E666. Residue H695 is the Proton donor of the active site. C727 contributes to the Zn(2+) binding site.

It belongs to the vitamin-B12 independent methionine synthase family. Requires Zn(2+) as cofactor.

It carries out the reaction 5-methyltetrahydropteroyltri-L-glutamate + L-homocysteine = tetrahydropteroyltri-L-glutamate + L-methionine. It participates in amino-acid biosynthesis; L-methionine biosynthesis via de novo pathway; L-methionine from L-homocysteine (MetE route): step 1/1. In terms of biological role, catalyzes the transfer of a methyl group from 5-methyltetrahydrofolate to homocysteine resulting in methionine formation. This is 5-methyltetrahydropteroyltriglutamate--homocysteine methyltransferase from Cupriavidus necator (Alcaligenes eutrophus).